The chain runs to 418 residues: Tyrosine--tRNA ligase (418 aa).

Residue tyrosine 34 participates in L-tyrosine binding. A 'HIGH' region motif is present at residues 39 to 48; sequence PTADSLHLGH. L-tyrosine is bound by residues tyrosine 169 and glutamine 173. Positions 229–233 match the 'KMSKS' region motif; that stretch reads KFGKS. Lysine 232 is an ATP binding site. An S4 RNA-binding domain is found at 352–418; it reads HNIVEILVAA…GKKKYAVLTY (67 aa).

This sequence belongs to the class-I aminoacyl-tRNA synthetase family. TyrS type 1 subfamily. In terms of assembly, homodimer.

It is found in the cytoplasm. It catalyses the reaction tRNA(Tyr) + L-tyrosine + ATP = L-tyrosyl-tRNA(Tyr) + AMP + diphosphate + H(+). Catalyzes the attachment of tyrosine to tRNA(Tyr) in a two-step reaction: tyrosine is first activated by ATP to form Tyr-AMP and then transferred to the acceptor end of tRNA(Tyr). The sequence is that of Tyrosine--tRNA ligase from Streptococcus pyogenes serotype M49 (strain NZ131).